Here is a 347-residue protein sequence, read N- to C-terminus: Autoinducer 2 import system permease protein LsrC (347 aa).

Helical transmembrane passes span 14–34 (LLAI…YLSV), 39–59 (MVFS…MVML), 72–92 (GMCA…PVAC), 93–113 (LATL…VAWL), 115–135 (IPAI…MLLW), 155–175 (VFLG…LMAW), 213–233 (LNGG…GFIP), 249–269 (VLGG…ILGA), and 284–304 (IPAW…LVFD).

Belongs to the binding-protein-dependent transport system permease family. AraH/RbsC subfamily. In terms of assembly, the complex is composed of two ATP-binding proteins (LsrA), two transmembrane proteins (LsrC and LsrD) and a solute-binding protein (LsrB).

The protein resides in the cell inner membrane. Functionally, part of the ABC transporter complex LsrABCD involved in autoinducer 2 (AI-2) import. Probably responsible for the translocation of the substrate across the membrane. The sequence is that of Autoinducer 2 import system permease protein LsrC (lsrC) from Salmonella choleraesuis (strain SC-B67).